The following is a 310-amino-acid chain: Probable manganese-dependent inorganic pyrophosphatase (310 aa).

Mn(2+) contacts are provided by histidine 9, aspartate 13, aspartate 15, aspartate 76, histidine 98, and aspartate 150.

It belongs to the PPase class C family. As to quaternary structure, homodimer. Mn(2+) serves as cofactor.

It localises to the cytoplasm. It catalyses the reaction diphosphate + H2O = 2 phosphate + H(+). The chain is Probable manganese-dependent inorganic pyrophosphatase (ppaC) from Streptococcus mutans serotype c (strain ATCC 700610 / UA159).